Consider the following 896-residue polypeptide: FHIP family protein C05D11.8 (896 aa).

The segment at 823–865 is disordered; the sequence is STASSPRTSDDHDPTLFYGRSTMAPPGRKPLLREPSRQETLDD. The segment covering 853–865 has biased composition (basic and acidic residues); sequence LLREPSRQETLDD.

This sequence belongs to the FHIP family.

The protein is FHIP family protein C05D11.8 of Caenorhabditis elegans.